The sequence spans 694 residues: Elongation factor G (694 aa).

A tr-type G domain is found at 8 to 282; it reads DRLRNIGIMA…AIVDYLPSPL (275 aa). GTP-binding positions include 17 to 24, 81 to 85, and 135 to 138; these read AHIDAGKT, DTPGH, and NKMD. The segment at 284-303 is disordered; sequence IPPVQGTDPETGEPAERKAD.

The protein belongs to the TRAFAC class translation factor GTPase superfamily. Classic translation factor GTPase family. EF-G/EF-2 subfamily.

The protein resides in the cytoplasm. Catalyzes the GTP-dependent ribosomal translocation step during translation elongation. During this step, the ribosome changes from the pre-translocational (PRE) to the post-translocational (POST) state as the newly formed A-site-bound peptidyl-tRNA and P-site-bound deacylated tRNA move to the P and E sites, respectively. Catalyzes the coordinated movement of the two tRNA molecules, the mRNA and conformational changes in the ribosome. This Symbiobacterium thermophilum (strain DSM 24528 / JCM 14929 / IAM 14863 / T) protein is Elongation factor G.